A 351-amino-acid chain; its full sequence is Serine/threonine-protein kinase ZRK1 (351 aa).

In terms of domain architecture, Protein kinase spans F60–L347. ATP contacts are provided by residues V66 to W74 and K87. D191 acts as the Proton acceptor in catalysis.

The protein belongs to the protein kinase superfamily. Ser/Thr protein kinase family. ZRK subfamily. As to quaternary structure, component of a stable high-order oligomeric complex made of RKS1 and RPP13L4/ZAR1 which recruits Xanthomonas campestris effector XopAC/AvrAC-mediated uridylylated PBL2 in the presence of ATP to form a wheel-like pentameric resistosome; this complex triggers immunity toward X.campestris in vascular tissues. Interacts with RPP13L4/ZAR1 and uridylylated PBL2. As to expression, expressed at high levels in germinating seeds and at lower levels in adult leaves.

The catalysed reaction is L-seryl-[protein] + ATP = O-phospho-L-seryl-[protein] + ADP + H(+). It catalyses the reaction L-threonyl-[protein] + ATP = O-phospho-L-threonyl-[protein] + ADP + H(+). In terms of biological role, serine/threonine-protein kinase that confers a broad-spectrum quantitative disease resistance (QDR) to the pathogenic biotrophic bacteria Xanthomonas campestris (e.g. pv. campestris (Xcc), pv. raphani, pv. armoriaceae and pv. incanae) by restricting bacterial spread to the vascular system from the infection site; X.campestris causes black rot disease in crops. Seems to not have any kinase activity. The protein is Serine/threonine-protein kinase ZRK1 of Arabidopsis thaliana (Mouse-ear cress).